A 598-amino-acid polypeptide reads, in one-letter code: Fibulin-1 (598 aa).

31 cysteine pairs are disulfide-bonded: Ala-1/Cys-25, Cys-7/Cys-26, Cys-28/Cys-52, Cys-29/Cys-59, Cys-42/Cys-60, Cys-96/Cys-106, Cys-102/Cys-115, Cys-117/Cys-130, Cys-136/Cys-149, Cys-143/Cys-158, Cys-164/Cys-176, Cys-182/Cys-195, Cys-189/Cys-204, Cys-210/Cys-222, Cys-228/Cys-242, Cys-257/Cys-270, Cys-275/Cys-288, Cys-282/Cys-297, Cys-299/Cys-312, Cys-318/Cys-330, Cys-326/Cys-339, Cys-341/Cys-354, Cys-360/Cys-369, Cys-365/Cys-378, Cys-380/Cys-394, Cys-400/Cys-413, Cys-409/Cys-422, Cys-424/Cys-438, Cys-444/Cys-457, Cys-451/Cys-466, and Cys-471/Cys-483. Anaphylatoxin-like domains lie at 1-27 (ANEQ…RCCH) and 28-60 (CCLL…RACC). The N-linked (GlcNAc...) asparagine glycan is linked to Asn-14. An EGF-like 1 domain is found at 92 to 131 (LNDRCRGGGPCKQQCRDTGDEVVCSCFVGYQLLSDGVSCE). The region spanning 132 to 177 (DVNECITGSHSCRLGESCINTVGSFRCQRDSSCGTGYELTEDNSCK) is the EGF-like 2; calcium-binding domain. The EGF-like 3; calcium-binding domain maps to 178–223 (DIDQCESGIHNCLPDFICQNTLGSFRCRPKLQCKNGFIQDALANCI). Positions 224 to 270 (DINECLSIVSAPCPTGHTCINTEGSYTQKNVPNCGRGYHLNEEGTRC) constitute an EGF-like 4; calcium-binding domain. Residues 271–313 (DVNECAPPAEPCGKGHRCVNSPGSFRCECKTGYYFDGISRMCV) enclose the EGF-like 5; calcium-binding domain. The interval 271-355 (DVNECAPPAE…RLSVDGRSCE (85 aa)) is self-association and FN1-binding. The EGF-like 6; calcium-binding domain occupies 314-355 (DVNECQRYPGRLCGHKCENTLGSYVCSCSVGFRLSVDGRSCE). An EGF-like 7; calcium-binding domain is found at 356–395 (DINECSSSPCSQECANVYGSYQCYCRRGYQLSDVDGVTCE). The region spanning 396 to 439 (DIDECALPTGGHICSYRCINIPGSFQCSCPASGYRLAPNGRNCQ) is the EGF-like 8; calcium-binding domain. Positions 440 to 484 (DIDECVTGIHNCSINETCFNIQGGFRCLAFECPENYRRSAATRCE) constitute an EGF-like 9; calcium-binding domain. N-linked (GlcNAc...) asparagine glycans are attached at residues Asn-450 and Asn-454.

This sequence belongs to the fibulin family. Homomultimerizes and interacts with various extracellular matrix components. Interacts with FBLN7. Interacts with the mature/soluble form of DTR. Interacts with CCN3.

It localises to the secreted. The protein localises to the extracellular space. The protein resides in the extracellular matrix. In terms of biological role, incorporated into fibronectin-containing matrix fibers. May play a role in cell adhesion and migration along protein fibers within the extracellular matrix (ECM). Could be important for certain developmental processes and contribute to the supramolecular organization of ECM architecture, in particular to those of basement membranes. May serve to anchor the mature/soluble form of DTR to its fibers as it migrates through the extracellular matrix. The direct physical association with DTR may be useful in such tissue developmental processes as wound healing. The polypeptide is Fibulin-1 (FBLN1) (Chlorocebus aethiops (Green monkey)).